Consider the following 162-residue polypeptide: NADH-quinone oxidoreductase subunit I (162 aa).

2 4Fe-4S ferredoxin-type domains span residues 54–83 and 93–122; these read RRYE…IESE and TRYD…ETQI. Positions 63, 66, 69, 73, 102, 105, 108, and 112 each coordinate [4Fe-4S] cluster.

Belongs to the complex I 23 kDa subunit family. As to quaternary structure, NDH-1 is composed of 14 different subunits. Subunits NuoA, H, J, K, L, M, N constitute the membrane sector of the complex. [4Fe-4S] cluster is required as a cofactor.

It localises to the cell inner membrane. The catalysed reaction is a quinone + NADH + 5 H(+)(in) = a quinol + NAD(+) + 4 H(+)(out). Its function is as follows. NDH-1 shuttles electrons from NADH, via FMN and iron-sulfur (Fe-S) centers, to quinones in the respiratory chain. The immediate electron acceptor for the enzyme in this species is believed to be ubiquinone. Couples the redox reaction to proton translocation (for every two electrons transferred, four hydrogen ions are translocated across the cytoplasmic membrane), and thus conserves the redox energy in a proton gradient. The polypeptide is NADH-quinone oxidoreductase subunit I (Burkholderia pseudomallei (strain 668)).